Consider the following 557-residue polypeptide: Anthrax toxin receptor-like (557 aa).

Positions 1–25 (MRSHGRWGPCFLLFLLLLPPPLFRA) are cleaved as a signal peptide. Residues 26–345 (GSLRYHGPGW…KSNVSVTSST (320 aa)) are Extracellular-facing. The 171-residue stretch at 74 to 244 (DLYFILDKSG…KAMRDTVDAL (171 aa)) folds into the VWFA domain. The a divalent metal cation site is built by S82, S84, and T148. Residues 346 to 366 (CGIFSNWLYFLLPLLLLPLLL) traverse the membrane as a helical segment. Over 367-557 (CCLWRLCRKK…PTSKAPNTQD (191 aa)) the chain is Cytoplasmic. Disordered regions lie at residues 380–411 (EPPP…LPPP) and 497–557 (ESPS…NTQD). Residues 386-395 (KPEKEPEQEK) show a composition bias toward basic and acidic residues. A compositionally biased stretch (pro residues) spans 396–411 (PPPPPPPSPPPPLPPP). Residues 534–557 (GTLQNPLCPSLPRSPTSKAPNTQD) are compositionally biased toward polar residues.

It belongs to the ATR family.

The protein localises to the membrane. This is Anthrax toxin receptor-like (ANTXRL) from Macaca fascicularis (Crab-eating macaque).